We begin with the raw amino-acid sequence, 533 residues long: Lysophosphatidylcholine acyltransferase (533 aa).

Topologically, residues 1-79 (MTTSTIKPTG…VLTVLLLPIR (79 aa)) are cytoplasmic. The helical; Signal-anchor for type II membrane protein transmembrane segment at 80–100 (VVGCVLSLISAWMFACIGLYG) threads the bilayer. Residues 101–533 (MTLDDLKAKP…PKAVVTTAEN (433 aa)) lie on the Lumenal side of the membrane. An HXXXXD motif motif is present at residues 158–163 (HSSYVD). EF-hand domains lie at 402-437 (LKNTDLHKLFALLDHRRSGTVSLKSFLLCSLFCKLK), 439-474 (SDLLTFLRALIHLYSESSQQIDRESFVRLMRHAGGK), and 475-510 (LNEQKAQALFYALDTDNLGYVSFDSFVELTEKQKSS).

It belongs to the 1-acyl-sn-glycerol-3-phosphate acyltransferase family.

It localises to the endoplasmic reticulum membrane. The protein localises to the golgi apparatus membrane. Its subcellular location is the lipid droplet. The enzyme catalyses a 1-acyl-sn-glycero-3-phosphocholine + an acyl-CoA = a 1,2-diacyl-sn-glycero-3-phosphocholine + CoA. The protein operates within lipid metabolism; phospholipid metabolism. In terms of biological role, acetyltransferase which mediates the conversion of 1-acyl-sn-glycero-3-phosphocholine (LPC) into phosphatidylcholine (PC). Has a calcium-independent activity. Displays a clear preference for saturated fatty acyl-CoAs, and 1-myristoyl or 1-palmitoyl LPC as acyl donors and acceptors, respectively. Involved in the regulation of lipid droplet number and size. The sequence is that of Lysophosphatidylcholine acyltransferase from Drosophila melanogaster (Fruit fly).